The sequence spans 796 residues: Protein translocase subunit SecA 2 (796 aa).

ATP contacts are provided by residues glutamine 84, 102–106, and aspartate 496; that span reads GEGKT.

Belongs to the SecA family. As to quaternary structure, monomer and homodimer. Part of the essential Sec protein translocation apparatus which comprises SecA, SecYEG and auxiliary proteins SecDF. Other proteins may also be involved.

The protein localises to the cell membrane. It is found in the cytoplasm. The enzyme catalyses ATP + H2O + cellular proteinSide 1 = ADP + phosphate + cellular proteinSide 2.. Part of the Sec protein translocase complex. Interacts with the SecYEG preprotein conducting channel. Has a central role in coupling the hydrolysis of ATP to the transfer of proteins into and across the cell membrane, serving as an ATP-driven molecular motor driving the stepwise translocation of polypeptide chains across the membrane. The polypeptide is Protein translocase subunit SecA 2 (Staphylococcus epidermidis (strain ATCC 35984 / DSM 28319 / BCRC 17069 / CCUG 31568 / BM 3577 / RP62A)).